The primary structure comprises 296 residues: Bifunctional protein FolD (296 aa).

NADP(+) is bound by residues 170 to 172 (GRS) and serine 195.

This sequence belongs to the tetrahydrofolate dehydrogenase/cyclohydrolase family. In terms of assembly, homodimer.

The catalysed reaction is (6R)-5,10-methylene-5,6,7,8-tetrahydrofolate + NADP(+) = (6R)-5,10-methenyltetrahydrofolate + NADPH. The enzyme catalyses (6R)-5,10-methenyltetrahydrofolate + H2O = (6R)-10-formyltetrahydrofolate + H(+). It functions in the pathway one-carbon metabolism; tetrahydrofolate interconversion. Its function is as follows. Catalyzes the oxidation of 5,10-methylenetetrahydrofolate to 5,10-methenyltetrahydrofolate and then the hydrolysis of 5,10-methenyltetrahydrofolate to 10-formyltetrahydrofolate. The chain is Bifunctional protein FolD from Rhodospirillum rubrum (strain ATCC 11170 / ATH 1.1.1 / DSM 467 / LMG 4362 / NCIMB 8255 / S1).